Here is a 62-residue protein sequence, read N- to C-terminus: Weak neurotoxin 5 (62 aa).

Disulfide bonds link cysteine 3–cysteine 24, cysteine 6–cysteine 11, cysteine 17–cysteine 40, cysteine 44–cysteine 54, and cysteine 55–cysteine 60.

This sequence belongs to the three-finger toxin family. Ancestral subfamily. Orphan group II sub-subfamily. Expressed by the venom gland.

It is found in the secreted. Functionally, binds with low affinity to muscular (alpha-1-beta-1-delta-epsilon/CHRNA1-CHRNB1-CHRND-CHRNE) and very low affinity to neuronal (alpha-7/CHRNA7) nicotinic acetylcholine receptor (nAChR). This chain is Weak neurotoxin 5, found in Naja naja (Indian cobra).